The sequence spans 339 residues: Transcription initiation factor IIB (339 aa).

The TFIIB-type zinc-finger motif lies at 39–70 (EELICPVCGSKNIIKDYERAEIVCEMCGCVLQ). C43, C46, C62, and C65 together coordinate Zn(2+). 2 consecutive repeat copies span residues 156 to 239 (SELD…SREL) and 250 to 331 (DYVP…ELTE).

It belongs to the TFIIB family.

In terms of biological role, stabilizes TBP binding to an archaeal box-A promoter. Also responsible for recruiting RNA polymerase II to the pre-initiation complex (DNA-TBP-TFIIB). The protein is Transcription initiation factor IIB of Methanococcus maripaludis (strain C7 / ATCC BAA-1331).